The sequence spans 390 residues: Probable tRNA sulfurtransferase (390 aa).

Positions 60–162 (KQIIDDLKEV…YDCAIVYGHK (103 aa)) constitute a THUMP domain. Residues 180-181 (LL), 205-206 (TF), Arg-264, Gly-286, and Gln-295 contribute to the ATP site.

This sequence belongs to the ThiI family.

It is found in the cytoplasm. It catalyses the reaction [ThiI sulfur-carrier protein]-S-sulfanyl-L-cysteine + a uridine in tRNA + 2 reduced [2Fe-2S]-[ferredoxin] + ATP + H(+) = [ThiI sulfur-carrier protein]-L-cysteine + a 4-thiouridine in tRNA + 2 oxidized [2Fe-2S]-[ferredoxin] + AMP + diphosphate. It carries out the reaction [ThiS sulfur-carrier protein]-C-terminal Gly-Gly-AMP + S-sulfanyl-L-cysteinyl-[cysteine desulfurase] + AH2 = [ThiS sulfur-carrier protein]-C-terminal-Gly-aminoethanethioate + L-cysteinyl-[cysteine desulfurase] + A + AMP + 2 H(+). Its pathway is cofactor biosynthesis; thiamine diphosphate biosynthesis. Its function is as follows. Catalyzes the ATP-dependent transfer of a sulfur to tRNA to produce 4-thiouridine in position 8 of tRNAs, which functions as a near-UV photosensor. Also catalyzes the transfer of sulfur to the sulfur carrier protein ThiS, forming ThiS-thiocarboxylate. This is a step in the synthesis of thiazole, in the thiamine biosynthesis pathway. The sulfur is donated as persulfide by IscS. The sequence is that of Probable tRNA sulfurtransferase from Ureaplasma parvum serovar 3 (strain ATCC 27815 / 27 / NCTC 11736).